Consider the following 656-residue polypeptide: Kinesin-related protein SMY1 (656 aa).

One can recognise a Kinesin motor domain in the interval 27 to 364 (HIEVILRAIP…LEFGDSIRQI (338 aa)). 114–121 (GPSFSGKS) lines the ATP pocket. At T583 the chain carries Phosphothreonine.

It belongs to the TRAFAC class myosin-kinesin ATPase superfamily. Kinesin family.

Its subcellular location is the cytoplasm. It is found in the cytoskeleton. Functionally, possible microtubule-based motor that can interact or substitute with myosin 2 (MYO2). The sequence is that of Kinesin-related protein SMY1 (SMY1) from Saccharomyces cerevisiae (strain ATCC 204508 / S288c) (Baker's yeast).